The chain runs to 442 residues: Glycolipid 2-alpha-mannosyltransferase (442 aa).

Over 1 to 11 (MALFLSKRLLR) the chain is Cytoplasmic. The chain crosses the membrane as a helical; Signal-anchor for type II membrane protein span at residues 12–30 (FTVIAGAVIVLLLTLNSNS). The tract at residues 31–118 (RTQQYIPSSI…YITPSFANKA (88 aa)) is stem region. The Lumenal segment spans residues 31 to 442 (RTQQYIPSSI…KPKNWKKFRE (412 aa)). The tract at residues 68–95 (EQSALNSEASEDSEAMDEESKALKAAAE) is disordered. Positions 85 to 95 (EESKALKAAAE) are enriched in basic and acidic residues. The segment at 119–442 (GKPKACYVTL…KPKNWKKFRE (324 aa)) is catalytic. N-linked (GlcNAc...) asparagine glycosylation occurs at Asn197. Residue Glu329 is the Nucleophile of the active site.

This sequence belongs to the glycosyltransferase 15 family. It depends on Mn(2+) as a cofactor.

The protein resides in the golgi apparatus membrane. It participates in protein modification; protein glycosylation. Functionally, mannosyltransferase that transfers an alpha-D-mannosyl residue from GDP-mannose into lipid-linked oligosaccharide, forming an alpha-(1-&gt;2)-D-mannosyl-D-mannose linkage. Required for the attachment of the third mannose residue of O-linked saccharides. The sequence is that of Glycolipid 2-alpha-mannosyltransferase (KRE2) from Saccharomyces cerevisiae (strain ATCC 204508 / S288c) (Baker's yeast).